Reading from the N-terminus, the 462-residue chain is Proteases secretion protein PrtF (462 aa).

An N-terminal signal peptide occupies residues 1-23 (MRRKAVLLTVVLSLSGGSAQAMG).

Belongs to the outer membrane factor (OMF) (TC 1.B.17) family.

The protein resides in the cell outer membrane. Functionally, involved in the secretion of proteases A, B, C and G. This chain is Proteases secretion protein PrtF (prtF), found in Dickeya chrysanthemi (Pectobacterium chrysanthemi).